The primary structure comprises 169 residues: Cell division inhibitor SulA (169 aa).

The tract at residues 106-112 (ALRTGNY) is ftsZ binding. The segment at 162 to 169 (KIHSNLYH) is lon protease binding.

It belongs to the SulA family. In terms of assembly, interacts with FtsZ. Post-translationally, is rapidly cleaved and degraded by the Lon protease once DNA damage is repaired.

Component of the SOS system and an inhibitor of cell division. Accumulation of SulA causes rapid cessation of cell division and the appearance of long, non-septate filaments. In the presence of GTP, binds a polymerization-competent form of FtsZ in a 1:1 ratio, thus inhibiting FtsZ polymerization and therefore preventing it from participating in the assembly of the Z ring. This mechanism prevents the premature segregation of damaged DNA to daughter cells during cell division. The chain is Cell division inhibitor SulA from Salmonella agona (strain SL483).